A 557-amino-acid chain; its full sequence is Fatty acyl-CoA hydrolase precursor, medium chain (557 aa).

An N-terminal signal peptide occupies residues 1 to 25; that stretch reads MATEKNTLLSLILTAGITALVATGQ. Residues Cys-93 and Cys-122 are joined by a disulfide bond. Ser-227 serves as the catalytic Acyl-ester intermediate. Residues Glu-345 and His-460 each act as charge relay system in the active site. Asn-476 carries N-linked (GlcNAc...) asparagine glycosylation.

The protein belongs to the type-B carboxylesterase/lipase family. As to expression, highest levels in uropygial gland, much lower in liver and kidney.

Fatty acid biosynthesis chain termination and release of the free fatty acid product is achieved by hydrolysis of the thio ester by a thioesterase. This thioesterase may be associated with peroxisome proliferation and may play a role in the production of 3-hydroxy fatty acid diester pheromones. The protein is Fatty acyl-CoA hydrolase precursor, medium chain of Anas platyrhynchos (Mallard).